The sequence spans 354 residues: GTPase Obg (354 aa).

The region spanning Met-1–Leu-159 is the Obg domain. An OBG-type G domain is found at Ala-160 to Phe-333. Residues Gly-166 to Ser-173, Phe-191 to Thr-195, Asp-212 to Gly-215, Thr-283 to Asp-286, and Ser-314 to Val-316 contribute to the GTP site. Positions 173 and 193 each coordinate Mg(2+).

The protein belongs to the TRAFAC class OBG-HflX-like GTPase superfamily. OBG GTPase family. Monomer. The cofactor is Mg(2+).

The protein localises to the cytoplasm. In terms of biological role, an essential GTPase which binds GTP, GDP and possibly (p)ppGpp with moderate affinity, with high nucleotide exchange rates and a fairly low GTP hydrolysis rate. Plays a role in control of the cell cycle, stress response, ribosome biogenesis and in those bacteria that undergo differentiation, in morphogenesis control. This is GTPase Obg from Anaeromyxobacter dehalogenans (strain 2CP-C).